Consider the following 172-residue polypeptide: Ribosome maturation factor RimM (172 aa).

Residues 95–168 (QEGEFYYHQI…CVDVELMEGL (74 aa)) form the PRC barrel domain.

This sequence belongs to the RimM family. In terms of assembly, binds ribosomal protein uS19.

Its subcellular location is the cytoplasm. In terms of biological role, an accessory protein needed during the final step in the assembly of 30S ribosomal subunit, possibly for assembly of the head region. Essential for efficient processing of 16S rRNA. May be needed both before and after RbfA during the maturation of 16S rRNA. It has affinity for free ribosomal 30S subunits but not for 70S ribosomes. The chain is Ribosome maturation factor RimM from Streptococcus pyogenes serotype M49 (strain NZ131).